The chain runs to 234 residues: Phosphoribosylaminoimidazole-succinocarboxamide synthase (234 aa).

The protein belongs to the SAICAR synthetase family.

It carries out the reaction 5-amino-1-(5-phospho-D-ribosyl)imidazole-4-carboxylate + L-aspartate + ATP = (2S)-2-[5-amino-1-(5-phospho-beta-D-ribosyl)imidazole-4-carboxamido]succinate + ADP + phosphate + 2 H(+). It participates in purine metabolism; IMP biosynthesis via de novo pathway; 5-amino-1-(5-phospho-D-ribosyl)imidazole-4-carboxamide from 5-amino-1-(5-phospho-D-ribosyl)imidazole-4-carboxylate: step 1/2. This chain is Phosphoribosylaminoimidazole-succinocarboxamide synthase, found in Staphylococcus aureus (strain MRSA252).